The primary structure comprises 546 residues: Chaperonin GroEL (546 aa).

Residues 30 to 33 (TLGP), Lys-51, 87 to 91 (DGTTT), Gly-415, and Asp-496 each bind ATP. The interval 527–546 (EKKAPAGAPGGMGGMGDMDF) is disordered. Residues 534-546 (APGGMGGMGDMDF) show a composition bias toward gly residues.

The protein belongs to the chaperonin (HSP60) family. As to quaternary structure, forms a cylinder of 14 subunits composed of two heptameric rings stacked back-to-back. Interacts with the co-chaperonin GroES.

Its subcellular location is the cytoplasm. It catalyses the reaction ATP + H2O + a folded polypeptide = ADP + phosphate + an unfolded polypeptide.. Functionally, together with its co-chaperonin GroES, plays an essential role in assisting protein folding. The GroEL-GroES system forms a nano-cage that allows encapsulation of the non-native substrate proteins and provides a physical environment optimized to promote and accelerate protein folding. This is Chaperonin GroEL from Rhodospirillum centenum (strain ATCC 51521 / SW).